Reading from the N-terminus, the 125-residue chain is Cu-Zn superoxide dismutase-like protein OPG175 (125 aa).

Cys52 and Cys102 are oxidised to a cystine.

It belongs to the Cu-Zn superoxide dismutase family.

The protein localises to the virion. It localises to the host cytoplasm. In terms of biological role, superoxide dismutase-like protein with no enzymatic activity. The sequence is that of Cu-Zn superoxide dismutase-like protein OPG175 (OPG175) from Cowpox virus (strain Brighton Red) (CPV).